Consider the following 295-residue polypeptide: Spermatogenesis-associated protein 4 (295 aa).

Positions 1–34 (MAAAGQAEECLPLPAAESSKTSLPTPPAVPAGKK) are disordered. The 107-residue stretch at 48-154 (SRLSRSVLRW…QEIYTLLTHQ (107 aa)) folds into the Calponin-homology (CH) domain. The tract at residues 251–295 (KRRYKSRGSKEKAAQPLSKSDNDGNARKEIHVKQSGNPCENTENL) is disordered. Residues 270-282 (SDNDGNARKEIHV) show a composition bias toward basic and acidic residues. A compositionally biased stretch (polar residues) spans 284 to 295 (QSGNPCENTENL).

In terms of tissue distribution, testis.

The protein localises to the nucleus. Its function is as follows. May play a role in apoptosis regulation. The chain is Spermatogenesis-associated protein 4 (Spata4) from Mus musculus (Mouse).